The sequence spans 2061 residues: MLRVIVESASNIPKTKFGKPDPIVSVIFKDEKKKTKKVDNELNPVWNEILEFDLRGIPLDFSSSLGIIVKDFETIGQNKLIGTATVALKDLTGDQSRSLPYKLISLLNEKGQDTGATIDLVIGYDPPSAPHPNDLSGPSVPGMGGDGEEDEGDEDRLDNAVRGPGPKGPVGTVSEAQLARRLTKVKNSRRMLSNKPQDFQIRVRVIEGRQLSGNNIRPVVKVHVCGQTHRTRIKRGNNPFFDELFFYNVNMTPSELMDEIISIRVYNSHSLRADCLMGEFKIDVGFVYDEPGHAVMRKWLLLNDPEDTSSGSKGYMKVSMFVLGTGDEPPPERRDRDNDSDDVESNLLLPAGIALRWVTFLLKIYRAEDIPQMDDAFSQTVKEIFGGNADKKNLVDPFVEVSFAGKKVCTNIIEKNANPEWNQVVNLQIKFPSVCEKIKLTIYDWDRLTKNDVVGTTYLHLSKIAASGGEVEDFSSSGTGAASYTVNTGETEVGFVPTFGPCYLNLYGSPREYTGFPDPYDELNTGKGEGVAYRGRILVELATFLEKTPPDKKLEPISNDDLLVVEKYQRRRKYSLSAVFHSATMLQDVGEAIQFEVSIGNYGNKFDTTCKPLASTTQYSRAVFDGNYYYYLPWAHTKPVVTLTSYWEDISHRLDAVNTLLAMAERLQTNIEALKSGIQGKIPANQLAELWLKLIDEVIEDTRYTLPLTEGKANVTVLDTQIRKLRSRSLSQIHEAAVRMRSEATDVKSTLAEIEDWLDKLMQLTEEPQNSMPDIIIWMIRGEKRLAYARIPAHQVLYSTSGENASGKYCGKTQTIFLKYPQEKNNGPKVPVELRVNIWLGLSAVEKKFNSFAEGTFTVFAEMYENQALMFGKWGTSGLVGRHKFSDVTGKIKLKREFFLPPKGWEWEGEWIVDPERSLLTEADAGHTEFTDEVYQNESRYPGGDWKPAEDTYTDANGDKAASPSELTCPPGWEWEDDAWSYDINRAVDEKGWEYGITIPPDHKPKSWVAAEKMYHTHRRRRLVRKRKKDLTQTASSTARAMEELQDQEGWEYASLIGWKFHWKQRSSDTFRRRRWRRKMAPSETHGAAAIFKLEGALGADTTEDGDEKSLEKQKHSATTVFGANTPIVSCNFDRVYIYHLRCYVYQARNLLALDKDSFSDPYAHICFLHRSKTTEIIHSTLNPTWDQTIIFDEVEIYGEPQTVLQNPPKVIMELFDNDQVGKDEFLGRSIFSPVVKLNSEMDITPKLLWHPVMNGDKACGDVLVTAELILRGKDGSNLPILPPQRAPNLYMVPQGIRPVVQLTAIEILAWGLRNMKNFQMASITSPSLVVECGGERVESVVIKNLKKTPNFPSSVLFMKVFLPKEELYMPPLVIKVIDHRQFGRKPVVGQCTIERLDRFRCDPYAGKEDIVPQLKASLLSAPPCRDIVIEMEDTKPLLASKLTEKEEEIVDWWSKFYASSGEHEKCGQYIQKGYSKLKIYNCELENVAEFEGLTDFSDTFKLYRGKSDENEDPSVVGEFKGSFRIYPLPDDPSVPAPPRQFRELPDSVPQECTVRIYIVRGLELQPQDNNGLCDPYIKITLGKKVIEDRDHYIPNTLNPVFGRMYELSCYLPQEKDLKISVYDYDTFTRDEKVGETIIDLENRFLSRFGSHCGIPEEYCVSGVNTWRDQLRPTQLLQNVARFKGFPQPILSEDGSRIRYGGRDYSLDEFEANKILHQHLGAPEERLALHILRTQGLVPEHVETRTLHSTFQPNISQGKLQMWVDVFPKSLGPPGPPFNITPRKAKKYYLRVIIWNTKDVILDEKSITGEEMSDIYVKGWIPGNEENKQKTDVHYRSLDGEGNFNWRFVFPFDYLPAEQLCIVAKKEHFWSIDQTEFRIPPRLIIQIWDNDKFSLDDYLGFLELDLRHTIIPAKSPEKCRLDMIPDLKAMNPLKAKTASLFEQKSMKGWWPCYAEKDGARVMAGKVEMTLEILNEKEADERPAGKGRDEPNMNPKLDLPNRPETSFLWFTNPCKTMKFIVWRRFKWVIIGLLFLLILLLFVAVLLYSLPNYLSMKIVKPNV.

The region spanning 1–101 (MLRVIVESAS…TGDQSRSLPY (101 aa)) is the C2 1 domain. At 1–2025 (MLRVIVESAS…MKFIVWRRFK (2025 aa)) the chain is on the cytoplasmic side. The tract at residues 123–172 (GYDPPSAPHPNDLSGPSVPGMGGDGEEDEGDEDRLDNAVRGPGPKGPVGT) is disordered. The span at 146–156 (DGEEDEGDEDR) shows a compositional bias: acidic residues. S174 carries the post-translational modification Phosphoserine. C2 domains follow at residues 181–300 (RLTK…RKWL) and 339–474 (DSDD…VEDF). Residues 186–281 (KNSRRMLSNK…RADCLMGEFK (96 aa)) are necessary for interaction with EHD2. A disordered region spans residues 323–342 (LGTGDEPPPERRDRDNDSDD). Residues D390, D396, D444, D446, and D452 each coordinate Ca(2+). N6-acetyllysine is present on K553. Residue S729 is modified to Phosphoserine. At K884 the chain carries N6-acetyllysine. A disordered region spans residues 938-967 (ESRYPGGDWKPAEDTYTDANGDKAASPSEL). C2 domains are found at residues 1123–1251 (GANT…LLWH) and 1282–1410 (LPPQ…GKED). The Ca(2+) site is built by D1155, D1161, D1217, and D1219. K1507 carries the N6-acetyllysine modification. 2 consecutive C2 domains span residues 1536–1654 (PAPP…SHCG) and 1772–1920 (GPPG…EKCR). 7 residues coordinate Ca(2+): D1569, D1575, D1624, D1626, D1891, S1894, and D1897. The residue at position 1915 (S1915) is a Phosphoserine. Residues 2026 to 2046 (WVIIGLLFLLILLLFVAVLLY) traverse the membrane as a helical segment. The Extracellular segment spans residues 2047-2061 (SLPNYLSMKIVKPNV).

It belongs to the ferlin family. As to quaternary structure, interacts with DNM2 and KDR. Interacts with EHD1. Interacts with EHD2; the interaction is direct. Interacts with RIPOR2. Requires Ca(2+) as cofactor. Expressed in myoblast and endothelial cells (at protein level). Highly expressed in cardiac and skeletal muscles. Also present in lung, and at very low levels in kidney, placenta and brain.

It localises to the cell membrane. It is found in the nucleus membrane. The protein resides in the cytoplasmic vesicle membrane. Its function is as follows. Calcium/phospholipid-binding protein that plays a role in the plasmalemma repair mechanism of endothelial cells that permits rapid resealing of membranes disrupted by mechanical stress. Involved in endocytic recycling. Implicated in VEGF signal transduction by regulating the levels of the receptor KDR. The chain is Myoferlin (MYOF) from Homo sapiens (Human).